Here is a 964-residue protein sequence, read N- to C-terminus: GGISVPGPMGPSGPRGLPGPPGAPGPQGFQGPPGEPGEPGSGPMGPRGPPGPPGKNGDDGEAGKPGRPGERGPPGPQGARGLPGTAGLPGMKGHRGFSGLDGAKGDAGPAGPKQMGPRGPGERGRPGASGPAGARGNDGATGAAGPPGPTGPAGPPGFPGAVGAKGEAGPQGARGSEGPQGVRGEPGPPGPAGAAGPAGNPGADGQPGAKGANGAPGIAGAPGFPGARGPSGPQGPSGPPGPKGNSGEPGAPGSKAKGEPGPTGIQGPPGPAGEEGKRGARGEPGPTGLPGPPGERGGPGSRGFPGADGVAGPKGPAGERGSPGPAGPKGSPGEAGRPGEAGLPGAKGLTGSPGSPGPDGKTGPPGPAGQDGRPGPGPPGARGQAGVMGFPGPKGAAGEPGKAGERGVPGPPGAVGPAGKDGEAGAQGPPGPAGPAGERGEQGPAGPGFQGLPGPAGPPGEAGKPGEQGVPGDLGAPGPSGARGERGFPGERGVQGPPGPAGPRGLQGMPGERGAAGLPGPKGDRGDAGPKGADGAPGKDGVRGLTGPIGPPGPAGAPGDKGESGPSGPAGPTGARGAPGDRGEPGPPGPAGFAGPPGADGQPGAKGEPGDAGAKGDAGPPGPAGPTGPPGPIGNLGAPGPKGARGSAGPPGATGFPGAAGRVGPPGPSGNAGPPGPPGPVGKEGGKGPRGETGPAEVGPPGPPGPGEKGSPGADGPAGAPGTPGPQGISGQRGVVGLPGQRGERGFPGLPGPSGEPGKQGPSGSSGERGPPGPMGPPGLAGPPGESGREGPGAEGSPGRDGSPGPKGDRGETGPGPPGAPGAPGAPGPVGPAGKSGDRGETGPGPAGPAGPAGARGPAGPQGPRGDKGETGEQGDRGIKGHRGFSGLQGPAGPPGSPGEQGPSGASGPAGPRGPPGSAGSPGKDGLNGLPGPIGPPGPRGRTGDAGPVGPPGPPGPPGPPGPP.

The disordered stretch occupies residues glycine 1–proline 964. Proline 18, proline 21, proline 24, proline 33, proline 36, proline 39, proline 53, proline 68, proline 74, proline 83, and proline 89 each carry 4-hydroxyproline. A compositionally biased stretch (basic and acidic residues) spans asparagine 56–glutamate 70. Lysine 92 carries the 5-hydroxylysine; alternate modification. An O-linked (Gal...) hydroxylysine; alternate glycan is attached at lysine 92. A Phosphoserine modification is found at serine 98. Composition is skewed to low complexity over residues aspartate 106–proline 117 and proline 126–alanine 144. 12 positions are modified to 4-hydroxyproline: proline 126, proline 147, proline 156, proline 159, proline 186, proline 189, proline 201, proline 207, proline 216, proline 222, proline 225, and proline 240. Positions proline 146–phenylalanine 158 are enriched in pro residues. A compositionally biased stretch (low complexity) spans alanine 192–serine 231. At lysine 243 the chain carries 5-hydroxylysine. Residues proline 249, proline 252, proline 260, proline 269, proline 284, proline 290, proline 299, and proline 305 each carry the 4-hydroxyproline modification. Over residues glycine 294–glycine 303 the composition is skewed to gly residues. 5-hydroxylysine is present on lysine 314. 24 positions are modified to 4-hydroxyproline: proline 323, proline 332, proline 338, proline 344, proline 353, proline 356, proline 365, proline 374, proline 379, proline 391, proline 400, proline 409, proline 412, proline 430, proline 447, proline 453, proline 459, proline 465, proline 471, proline 477, proline 489, proline 498, proline 510, and proline 519. Over residues lysine 347–arginine 373 the composition is skewed to low complexity. The segment covering alanine 381–proline 400 has biased composition (low complexity). Low complexity predominate over residues proline 459–glutamine 468. A 5-hydroxylysine modification is found at lysine 531. 3 positions are modified to 4-hydroxyproline: proline 537, proline 552, and proline 558. Over residues serine 564–alanine 578 the composition is skewed to low complexity. Serine 567 bears the Phosphoserine mark. 8 positions are modified to 4-hydroxyproline: proline 579, proline 585, proline 588, proline 597, proline 603, proline 621, proline 630, and proline 639. Positions alanine 591–alanine 618 are enriched in low complexity. Over residues proline 620–proline 632 the composition is skewed to pro residues. A 5-hydroxylysine modification is found at lysine 642. Residues serine 647 to valine 663 are compositionally biased toward low complexity. 4-hydroxyproline is present on residues proline 651 and proline 657. A 3-hydroxyproline modification is found at proline 665. A 4-hydroxyproline mark is found at proline 666, proline 675, proline 678, proline 704, proline 712, proline 721, proline 739, proline 748, proline 751, proline 757, proline 772, proline 778, proline 784, proline 792, and proline 798. Over residues lysine 709–proline 721 the composition is skewed to low complexity. Over residues proline 771–alanine 781 the composition is skewed to pro residues. At lysine 807 the chain carries 5-hydroxylysine. The span at proline 815–valine 830 shows a compositional bias: pro residues. Proline 818, proline 821, and proline 824 each carry 4-hydroxyproline. Low complexity predominate over residues alanine 850–proline 864. The span at arginine 865 to isoleucine 879 shows a compositional bias: basic and acidic residues. Residue lysine 868 is modified to 5-hydroxylysine. Lysine 880 is subject to 5-hydroxylysine; alternate. Lysine 880 carries an O-linked (Gal...) hydroxylysine; alternate glycan. 4-hydroxyproline occurs at positions 895, 898, 916, and 931. The segment covering proline 898–proline 931 has biased composition (low complexity). A 3-hydroxyproline modification is found at proline 936. At proline 937 the chain carries 4-hydroxyproline. Over residues valine 949–proline 964 the composition is skewed to pro residues. A 3-hydroxyproline modification is found at proline 951. Residue proline 952 is modified to 4-hydroxyproline. Proline 954 is modified (3-hydroxyproline). Proline 955 carries the post-translational modification 4-hydroxyproline. The residue at position 957 (proline 957) is a 3-hydroxyproline. 4-hydroxyproline is present on residues proline 958, proline 961, and proline 964.

The protein belongs to the fibrillar collagen family. In terms of assembly, trimers of one alpha 2(I) and two alpha 1(I) chains. Post-translationally, contains mostly 4-hydroxyproline. Proline residues at the third position of the tripeptide repeating unit (G-X-Y) are hydroxylated in some or all of the chains. In terms of processing, contains 3-hydroxyproline at a few sites. This modification occurs on the first proline residue in the sequence motif Gly-Pro-Hyp, where Hyp is 4-hydroxyproline. Lysine residues at the third position of the tripeptide repeating unit (G-X-Y) are 5-hydroxylated in some or all of the chains. Post-translationally, O-glycosylated on hydroxylated lysine residues. The O-linked glycan consists of a Glc-Gal disaccharide. In terms of tissue distribution, expressed in bones.

The protein localises to the secreted. The protein resides in the extracellular space. It localises to the extracellular matrix. Functionally, type I collagen is a member of group I collagen (fibrillar forming collagen). This chain is Collagen alpha-1(I) chain, found in Parocnus serus (Greater Haitian ground sloth).